The following is a 294-amino-acid chain: Bifunctional protein FolD (294 aa).

NADP(+) contacts are provided by residues 175 to 177 and I241; that span reads GAS.

Belongs to the tetrahydrofolate dehydrogenase/cyclohydrolase family. As to quaternary structure, homodimer.

It catalyses the reaction (6R)-5,10-methylene-5,6,7,8-tetrahydrofolate + NADP(+) = (6R)-5,10-methenyltetrahydrofolate + NADPH. The catalysed reaction is (6R)-5,10-methenyltetrahydrofolate + H2O = (6R)-10-formyltetrahydrofolate + H(+). It participates in one-carbon metabolism; tetrahydrofolate interconversion. Its function is as follows. Catalyzes the oxidation of 5,10-methylenetetrahydrofolate to 5,10-methenyltetrahydrofolate and then the hydrolysis of 5,10-methenyltetrahydrofolate to 10-formyltetrahydrofolate. The polypeptide is Bifunctional protein FolD (Hahella chejuensis (strain KCTC 2396)).